Consider the following 204-residue polypeptide: Large ribosomal subunit protein bL25 (204 aa).

It belongs to the bacterial ribosomal protein bL25 family. CTC subfamily. In terms of assembly, part of the 50S ribosomal subunit; part of the 5S rRNA/L5/L18/L25 subcomplex. Contacts the 5S rRNA. Binds to the 5S rRNA independently of L5 and L18.

This is one of the proteins that binds to the 5S RNA in the ribosome where it forms part of the central protuberance. The chain is Large ribosomal subunit protein bL25 from Pseudomonas paraeruginosa (strain DSM 24068 / PA7) (Pseudomonas aeruginosa (strain PA7)).